Reading from the N-terminus, the 402-residue chain is Acetate kinase (402 aa).

Position 7 (Asn7) interacts with Mg(2+). Residue Lys14 participates in ATP binding. Residue Arg95 participates in substrate binding. Asp152 acts as the Proton donor/acceptor in catalysis. ATP is bound by residues 212 to 216, 286 to 288, and 334 to 338; these read HLGNG, DMR, and GIGEN. Mg(2+) is bound at residue Glu388.

The protein belongs to the acetokinase family. In terms of assembly, homodimer. Mg(2+) serves as cofactor. Requires Mn(2+) as cofactor.

It is found in the cytoplasm. The enzyme catalyses acetate + ATP = acetyl phosphate + ADP. Its pathway is metabolic intermediate biosynthesis; acetyl-CoA biosynthesis; acetyl-CoA from acetate: step 1/2. Functionally, catalyzes the formation of acetyl phosphate from acetate and ATP. Can also catalyze the reverse reaction. The chain is Acetate kinase from Oleidesulfovibrio alaskensis (strain ATCC BAA-1058 / DSM 17464 / G20) (Desulfovibrio alaskensis).